The following is a 435-amino-acid chain: Zinc finger CCCH domain-containing protein 17 (435 aa).

Disordered regions lie at residues 1–30 (MDIETDGRFGNKRVHHRLGPANGAASSSTS) and 58–107 (TAKR…GPRH). Residues 28-54 (STSGKVCIHWRAGRCNRFPCPYLHSEL) form a C3H1-type 1 zinc finger. Residues 77-103 (SGGGGGRGAGGAGGPNKWGRGPGGADG) are compositionally biased toward gly residues. A C3H1-type 2 zinc finger spans residues 108–135 (KVPDRPCRYFLAGDCSYGEKCRYPHSYS). WD repeat units lie at residues 148–189 (GHEK…GVIN), 191–225 (GREIGCMISEGPWLFVGIPDAVKVWNMQTQAEMNL), 227–264 (GPTGQVYALAVGNELLFAATQDGRILAWRFSAATNGFE), 271–308 (GHQLAVVSLVVGAMRLYSASMDKTIRVWDLATLQCIQT), 311–348 (DHTGVVMSVLCWDQFLLSCSLDQTIKVWAATESGSLEV), 355–395 (EHGA…DRGR), and 397–435 (FSKQEIRAIQVGPSGLFFTGDGTGELKVWQWVIDGSQTK).

This chain is Zinc finger CCCH domain-containing protein 17, found in Oryza sativa subsp. japonica (Rice).